The chain runs to 28 residues: Phospholipase A2 pseudexin C chain (28 aa).

Y28 serves as a coordination point for Ca(2+).

Belongs to the phospholipase A2 family. Group I subfamily. Ca(2+) serves as cofactor. As to expression, expressed by the venom gland.

Its subcellular location is the secreted. The catalysed reaction is a 1,2-diacyl-sn-glycero-3-phosphocholine + H2O = a 1-acyl-sn-glycero-3-phosphocholine + a fatty acid + H(+). Its function is as follows. PLA2 catalyzes the calcium-dependent hydrolysis of the 2-acyl groups in 3-sn-phosphoglycerides. In Pseudechis porphyriacus (Red-bellied black snake), this protein is Phospholipase A2 pseudexin C chain.